The primary structure comprises 332 residues: Adenosine deaminase (332 aa).

The Zn(2+) site is built by histidine 12 and histidine 14. Substrate-binding residues include histidine 14, aspartate 16, and glycine 169. Zn(2+) is bound at residue histidine 196. Glutamate 199 serves as the catalytic Proton donor. Aspartate 277 is a binding site for Zn(2+).

The protein belongs to the metallo-dependent hydrolases superfamily. Adenosine and AMP deaminases family. Adenosine deaminase subfamily. The cofactor is Zn(2+).

It catalyses the reaction adenosine + H2O + H(+) = inosine + NH4(+). It carries out the reaction 2'-deoxyadenosine + H2O + H(+) = 2'-deoxyinosine + NH4(+). Functionally, catalyzes the hydrolytic deamination of adenosine and 2-deoxyadenosine. The polypeptide is Adenosine deaminase (Vibrio atlanticus (strain LGP32) (Vibrio splendidus (strain Mel32))).